The primary structure comprises 221 residues: MLFRYLVWLFRFIEVKNIASISLLVIGSNYLTTAIPNNTSTNISPTTSSNYSMTAIPNNTSTNISPTTSSNYSMTAIPNNTSTNISPTTSSNYSMTAIPNNISDKEDYTYFSTDKTASDGFTPITLYRAIRSTLNDTSTKTMTDHGLTRPYRPTTVIFHSDTSLPVKNATRDNIIKKTYRQVLSFFIRSNPLFPCFKNHEVFLNLANILNTILCIIVIKNV.

Tandem repeats lie at residues 28 to 48, 49 to 69, and 70 to 90. A 4; approximate repeat occupies 91–112; it reads SNYSMTAIPNNISDKEDYTYFS.

This sequence belongs to the asfivirus I196L family.

The sequence is that of Late protein I196L from African swine fever virus (isolate Tick/Malawi/Lil 20-1/1983) (ASFV).